Consider the following 191-residue polypeptide: MAGERERGGRERSRDREERDSEFVDKLVHINRVAKVVKGGKRFGFAALVVIGDQKGRVGFGHGKAREVPEAIRKATESAKRNLTRVPLREGRTLHHDIAGRHGAGRVYLRAAPAGTGIIAGGPMRAVFETLGIQDVVAKSVGSSNPYNMVRATFDALKHQDSPRSVSARRNIKVSTLQSRRVGGDAEAVAE.

The disordered stretch occupies residues 1–20 (MAGERERGGRERSRDREERD). Residues 23–86 (FVDKLVHINR…ESAKRNLTRV (64 aa)) form the S5 DRBM domain.

It belongs to the universal ribosomal protein uS5 family. In terms of assembly, part of the 30S ribosomal subunit. Contacts proteins S4 and S8.

In terms of biological role, with S4 and S12 plays an important role in translational accuracy. Located at the back of the 30S subunit body where it stabilizes the conformation of the head with respect to the body. This chain is Small ribosomal subunit protein uS5, found in Nitrobacter winogradskyi (strain ATCC 25391 / DSM 10237 / CIP 104748 / NCIMB 11846 / Nb-255).